The chain runs to 203 residues: Guanylate kinase (203 aa).

Positions 5–183 constitute a Guanylate kinase-like domain; the sequence is GVLYILSAPS…AVEELKSVII (179 aa). 12–19 lines the ATP pocket; the sequence is APSGAGKT.

This sequence belongs to the guanylate kinase family.

The protein localises to the cytoplasm. The catalysed reaction is GMP + ATP = GDP + ADP. In terms of biological role, essential for recycling GMP and indirectly, cGMP. The sequence is that of Guanylate kinase from Geobacter sulfurreducens (strain ATCC 51573 / DSM 12127 / PCA).